The primary structure comprises 100 residues: uncharacterized protein (100 aa).

Residues 1-18 form the signal peptide; that stretch reads MWGFLVLKARWLVTPVRT. The tract at residues 48–86 is disordered; that stretch reads LTRGVIRVSPQERSQQNQSAPKGPTPSTRPKPRTLGPQA. Positions 58 to 69 are enriched in polar residues; that stretch reads QERSQQNQSAPK. Residue asparagine 64 is glycosylated (N-linked (GlcNAc...) asparagine).

The protein localises to the secreted. This is an uncharacterized protein from Homo sapiens (Human).